The following is a 197-amino-acid chain: Transmembrane protein 126A (197 aa).

The Mitochondrial matrix portion of the chain corresponds to 1 to 35 (MENHEPDGTIIKENLTDIIARKINQLPEAERNLLE). Residues 36–56 (NGSTYVGLNAALCGLIANSLF) form a helical membrane-spanning segment. Over 57-58 (RR) the chain is Mitochondrial intermembrane. The helical transmembrane segment at 59–79 (ILHVTQARIAAGLPMAVIPFL) threads the bilayer. Over 80–107 (TANVSYKGFVSLPLNTGDLQCETCTVTR) the chain is Mitochondrial matrix. A helical membrane pass occupies residues 108 to 128 (GGLVGLVFGGLYPVFLAIPVN). Residues 129-160 (GGLAARYNSALLPEKGNILNYWIRISKPVFRK) are Mitochondrial intermembrane-facing. Residues 161–177 (MLFPILLQTGFAAYLGS) form a helical membrane-spanning segment. Over 178–197 (RQYKLLIKALQLPEPGLEIE) the chain is Mitochondrial matrix.

This sequence belongs to the TMEM126 family. Interacts with OXA1L; promoting cotranslational quality control in mitochondria.

The protein resides in the mitochondrion inner membrane. Its function is as follows. Protein required for the cotranslational protein quality control in the inner membrane of the mitochondria. Associates with newly synthesized polypeptides and may act as a chaperone that cooperates with OXA1L for the insertion of newly synthesized mitochondrial proteins into the inner membrane. Required for the assembly of the ND4 module of mitochondrial complex I. This is Transmembrane protein 126A (TMEM126A) from Bos taurus (Bovine).